The chain runs to 116 residues: Putative antiporter subunit mnhC2 (116 aa).

3 helical membrane passes run 3–23 (LILLMVIGFLIFIGTYMILSV), 28–48 (IVIGISIYTHAGNLIIMSMGN), and 72–92 (AIVLTAIVIGFAMTAFLLVLV).

This sequence belongs to the CPA3 antiporters (TC 2.A.63) subunit C family. In terms of assembly, may form a heterooligomeric complex that consists of seven subunits: mnhA2, mnhB2, mnhC2, mnhD2, mnhE2, mnhF2 and mnhG2.

The protein localises to the cell membrane. This is Putative antiporter subunit mnhC2 (mnhC2) from Staphylococcus saprophyticus subsp. saprophyticus (strain ATCC 15305 / DSM 20229 / NCIMB 8711 / NCTC 7292 / S-41).